The sequence spans 476 residues: Aspartyl/glutamyl-tRNA(Asn/Gln) amidotransferase subunit B (476 aa).

Belongs to the GatB/GatE family. GatB subfamily. In terms of assembly, heterotrimer of A, B and C subunits.

It carries out the reaction L-glutamyl-tRNA(Gln) + L-glutamine + ATP + H2O = L-glutaminyl-tRNA(Gln) + L-glutamate + ADP + phosphate + H(+). It catalyses the reaction L-aspartyl-tRNA(Asn) + L-glutamine + ATP + H2O = L-asparaginyl-tRNA(Asn) + L-glutamate + ADP + phosphate + 2 H(+). In terms of biological role, allows the formation of correctly charged Asn-tRNA(Asn) or Gln-tRNA(Gln) through the transamidation of misacylated Asp-tRNA(Asn) or Glu-tRNA(Gln) in organisms which lack either or both of asparaginyl-tRNA or glutaminyl-tRNA synthetases. The reaction takes place in the presence of glutamine and ATP through an activated phospho-Asp-tRNA(Asn) or phospho-Glu-tRNA(Gln). The chain is Aspartyl/glutamyl-tRNA(Asn/Gln) amidotransferase subunit B from Bacillus velezensis (strain DSM 23117 / BGSC 10A6 / LMG 26770 / FZB42) (Bacillus amyloliquefaciens subsp. plantarum).